A 102-amino-acid chain; its full sequence is Small ribosomal subunit protein eS24 (102 aa).

Belongs to the eukaryotic ribosomal protein eS24 family.

This chain is Small ribosomal subunit protein eS24, found in Methanococcus maripaludis (strain C7 / ATCC BAA-1331).